Here is a 554-residue protein sequence, read N- to C-terminus: Formate--tetrahydrofolate ligase (554 aa).

ATP is bound at residue 65-72 (TPAGEGKT).

The protein belongs to the formate--tetrahydrofolate ligase family.

It carries out the reaction (6S)-5,6,7,8-tetrahydrofolate + formate + ATP = (6R)-10-formyltetrahydrofolate + ADP + phosphate. It participates in one-carbon metabolism; tetrahydrofolate interconversion. This chain is Formate--tetrahydrofolate ligase, found in Petrotoga mobilis (strain DSM 10674 / SJ95).